The primary structure comprises 226 residues: Respiratory nitrate reductase 2 gamma chain (226 aa).

Topologically, residues 1 to 4 (MIQY) are periplasmic. A helical membrane pass occupies residues 5 to 30 (LNVFFYDIYPYICATVFFLGSWLRYD). The Cytoplasmic portion of the chain corresponds to 31–48 (YGQYTWRASSSQMLDKRG). The chain crosses the membrane as a helical span at residues 49–71 (MVIWSNLFHIGILGIFFGHLFGM). Heme b contacts are provided by His57 and His67. Over 72–83 (LTPHWMYAWFLP) the chain is Periplasmic. The helical transmembrane segment at 84–113 (VAAKQLMAMVLGGICGVLTLIGGAGLLWRR) threads the bilayer. Residues 114–125 (LTNQRVRATSTT) lie on the Cytoplasmic side of the membrane. Residues 126–149 (PDIIIMSILLIQCLLGLSTIPFSA) form a helical membrane-spanning segment. The Periplasmic portion of the chain corresponds to 150–183 (QYPDGSEMMKLVGWAQSIVTFRGGSSEMLNGVAF). Residues 184–199 (VFRLHLVLGMTIFLLF) form a helical membrane-spanning segment. 2 residues coordinate heme b: His188 and His206. Residues 200–226 (PFTRLVHVWSAPFEYFTRRYQIVRSRR) lie on the Cytoplasmic side of the membrane.

As to quaternary structure, dimer of heterotrimers each composed of an alpha, a beta and a gamma chain. Alpha and beta are catalytic chains; gamma chains are involved in binding the enzyme complex to the cytoplasmic membrane. Requires heme as cofactor.

It localises to the cell inner membrane. The enzyme catalyses nitrate + a quinol = a quinone + nitrite + H2O. Its function is as follows. This is a second nitrate reductase enzyme which can substitute for the NRA enzyme and allows E.coli to use nitrate as an electron acceptor during anaerobic growth. The gamma chain is a membrane-embedded heme-iron unit resembling cytochrome b, which transfers electrons from quinones to the beta subunit. This is Respiratory nitrate reductase 2 gamma chain (narV) from Escherichia coli (strain K12).